We begin with the raw amino-acid sequence, 351 residues long: Photosystem II D2 protein (351 aa).

A helical transmembrane segment spans residues 39 to 59; that stretch reads CAYLALGGWLTGTTFVTSWYT. His116 is a binding site for chlorophyll a. The chain crosses the membrane as a helical span at residues 123–139; the sequence is GFMLRQFEIARLVGIRP. Residues Gln128 and Asn141 each coordinate pheophytin a. The chain crosses the membrane as a helical span at residues 151-164; the sequence is VFVSVFLMYPLGQS. His196 is a chlorophyll a binding site. A helical transmembrane segment spans residues 206–226; it reads GALLCAIHGATVENTLFEDGE. A plastoquinone contacts are provided by His213 and Phe260. Position 213 (His213) interacts with Fe cation. His267 contacts Fe cation. Residues 277 to 293 traverse the membrane as a helical segment; the sequence is GLWMSAIGIVGLALNLR.

This sequence belongs to the reaction center PufL/M/PsbA/D family. PSII is composed of 1 copy each of membrane proteins PsbA, PsbB, PsbC, PsbD, PsbE, PsbF, PsbH, PsbI, PsbJ, PsbK, PsbL, PsbM, PsbT, PsbX, PsbY, PsbZ, Psb30/Ycf12, peripheral proteins PsbO, CyanoQ (PsbQ), PsbU, PsbV and a large number of cofactors. It forms dimeric complexes. The D1/D2 heterodimer binds P680, chlorophylls that are the primary electron donor of PSII, and subsequent electron acceptors. It shares a non-heme iron and each subunit binds pheophytin, quinone, additional chlorophylls, carotenoids and lipids. There is also a Cl(-1) ion associated with D1 and D2, which is required for oxygen evolution. The PSII complex binds additional chlorophylls, carotenoids and specific lipids. is required as a cofactor.

It is found in the cellular thylakoid membrane. The catalysed reaction is 2 a plastoquinone + 4 hnu + 2 H2O = 2 a plastoquinol + O2. Functionally, photosystem II (PSII) is a light-driven water:plastoquinone oxidoreductase that uses light energy to abstract electrons from H(2)O, generating O(2) and a proton gradient subsequently used for ATP formation. It consists of a core antenna complex that captures photons, and an electron transfer chain that converts photonic excitation into a charge separation. The D1/D2 (PsbA/PsbD) reaction center heterodimer binds P680, the primary electron donor of PSII as well as several subsequent electron acceptors. D2 is needed for assembly of a stable PSII complex. This is Photosystem II D2 protein from Crocosphaera subtropica (strain ATCC 51142 / BH68) (Cyanothece sp. (strain ATCC 51142)).